We begin with the raw amino-acid sequence, 78 residues long: Large ribosomal subunit protein eL20 (78 aa).

It belongs to the eukaryotic ribosomal protein eL20 family. As to quaternary structure, part of the 50S ribosomal subunit. Binds 23S rRNA.

This is Large ribosomal subunit protein eL20 from Pyrobaculum aerophilum (strain ATCC 51768 / DSM 7523 / JCM 9630 / CIP 104966 / NBRC 100827 / IM2).